The chain runs to 249 residues: 23S rRNA (guanosine-2'-O-)-methyltransferase RlmB (249 aa).

Gly-200, Ile-220, and Leu-229 together coordinate S-adenosyl-L-methionine.

It belongs to the class IV-like SAM-binding methyltransferase superfamily. RNA methyltransferase TrmH family. RlmB subfamily.

The protein localises to the cytoplasm. The catalysed reaction is guanosine(2251) in 23S rRNA + S-adenosyl-L-methionine = 2'-O-methylguanosine(2251) in 23S rRNA + S-adenosyl-L-homocysteine + H(+). Specifically methylates the ribose of guanosine 2251 in 23S rRNA. The sequence is that of 23S rRNA (guanosine-2'-O-)-methyltransferase RlmB from Xanthomonas axonopodis pv. citri (strain 306).